Consider the following 624-residue polypeptide: Alpha-mannosidase I MNS4 (624 aa).

Residues 1–7 are Cytoplasmic-facing; that stretch reads MDSNFKW. Residues 8 to 28 form a helical; Signal-anchor for type II membrane protein membrane-spanning segment; it reads LLFAILISLTFSGFVLHHGVL. Topologically, residues 29–624 are lumenal; the sequence is AESVKPDEAK…ETDDQRSYSS (596 aa). An N-linked (GlcNAc...) asparagine glycan is attached at asparagine 115. Glutamate 122 (proton donor) is an active-site residue. Residue aspartate 262 is part of the active site. Glutamate 355 functions as the Proton donor in the catalytic mechanism. The active site involves glutamate 376. A Ca(2+)-binding site is contributed by threonine 466. The N-linked (GlcNAc...) asparagine glycan is linked to asparagine 494. A disordered region spans residues 574–624; the sequence is QTVEKRPQEEEGFTSQSEPIMTISGGSSNDQTGQELTLLESETDDQRSYSS. A compositionally biased stretch (polar residues) spans 586–608; the sequence is FTSQSEPIMTISGGSSNDQTGQE.

It belongs to the glycosyl hydrolase 47 family. Ca(2+) serves as cofactor.

The protein resides in the endoplasmic reticulum membrane. Its pathway is protein modification; protein glycosylation. Can convert Man(9)GlcNAc(2) and Man(8)GlcNAc(2) into N-glycans with a terminal alpha-1,6-linked Man residue in the C-branch. Functions in the formation of unique N-glycan structures that are specifically recognized by components of the endoplasmic reticulum-associated degradation (ERAD) machinery, which leads to the degradation of misfolded glycoproteins. Most likely generates N-glycan signal on misfolded glycoproteins that is subsequently recognized by OS9. Required for ERAD of the heavily glycosylated and misfolded BRI1 variants BRI1-5 and BRI1-9. Does not seem to play role in N-glycan processing of correctly folded proteins destined for secretion. This is Alpha-mannosidase I MNS4 (MNS4) from Arabidopsis thaliana (Mouse-ear cress).